A 691-amino-acid chain; its full sequence is MARVVPIDMQRNIGIMAHIDAGKTTTTERILFYTGVSHKIGEVHDGAATMDWMEQEQERGITITSAATTCFWREHRVNIIDTPGHVDFTIEVERSLRVLDGAVCVFDAVAGVEPQSETVWRQADRYGVPRICFVNKMDRIGASFERCVGMIRDRLRAKPIPVQLPIGAEDRFEGVIDLITGKAVTFDKASKGQTFNVGDVPAEYRDQYDAMRFEMIEAVAEEDEALMEKYLGGEELTVEEIISCVRKATIARNIVPVLCGSAFRNMGVQPLLDAVVDFLPSPVDIEQMKGVNPDKEEETIVCPCDDKEPLAALVFKLFSDPYIGHLSFCRIYSGFIESGMTVLNANTGKRERVGRLLKMHANKREEIKWAGAGDIVALVGLKLASTGDTICDEKRPVVLESLDIPEPVIEVAIEPKTKADRDALSAALAKLAKEDPSFRVKGDDETNQTLIAGMGELHLEIIVDRLTREFSVNANVGKPQVAYRETITKPGKADTKHVKQSGGRGQYGHAVIEIEPNPGKGYEFVNSITGGVIPKEYIAPIDKGIQDALKSGILSGFPTVDIKVNLVFGSYHDVDSSEQAFYVTGSMAIKEAIAKSGPVLLEPIMDVEVVTPDEYLGDVMGDLNGRRGKVQSMEARVGAQSIRAQVPLSEMFGYATDLRSKTQGRATFSMQFHHYERVPAALAEELVKKKG.

The region spanning 8–283 (DMQRNIGIMA…AVVDFLPSPV (276 aa)) is the tr-type G domain. GTP is bound by residues 17–24 (AHIDAGKT), 81–85 (DTPGH), and 135–138 (NKMD).

It belongs to the TRAFAC class translation factor GTPase superfamily. Classic translation factor GTPase family. EF-G/EF-2 subfamily.

The protein resides in the cytoplasm. Functionally, catalyzes the GTP-dependent ribosomal translocation step during translation elongation. During this step, the ribosome changes from the pre-translocational (PRE) to the post-translocational (POST) state as the newly formed A-site-bound peptidyl-tRNA and P-site-bound deacylated tRNA move to the P and E sites, respectively. Catalyzes the coordinated movement of the two tRNA molecules, the mRNA and conformational changes in the ribosome. The protein is Elongation factor G of Nitratidesulfovibrio vulgaris (strain ATCC 29579 / DSM 644 / CCUG 34227 / NCIMB 8303 / VKM B-1760 / Hildenborough) (Desulfovibrio vulgaris).